Consider the following 191-residue polypeptide: Fe/S biogenesis protein NfuA (191 aa).

[4Fe-4S] cluster contacts are provided by cysteine 149 and cysteine 152.

This sequence belongs to the NfuA family. Homodimer. The cofactor is [4Fe-4S] cluster.

Its function is as follows. Involved in iron-sulfur cluster biogenesis. Binds a 4Fe-4S cluster, can transfer this cluster to apoproteins, and thereby intervenes in the maturation of Fe/S proteins. Could also act as a scaffold/chaperone for damaged Fe/S proteins. The polypeptide is Fe/S biogenesis protein NfuA (Escherichia coli O139:H28 (strain E24377A / ETEC)).